Here is a 67-residue protein sequence, read N- to C-terminus: Large ribosomal subunit protein bL35 (67 aa).

This sequence belongs to the bacterial ribosomal protein bL35 family.

The polypeptide is Large ribosomal subunit protein bL35 (Acidovorax ebreus (strain TPSY) (Diaphorobacter sp. (strain TPSY))).